The primary structure comprises 235 residues: Phosphoribosylaminoimidazole-succinocarboxamide synthase (235 aa).

It belongs to the SAICAR synthetase family.

The catalysed reaction is 5-amino-1-(5-phospho-D-ribosyl)imidazole-4-carboxylate + L-aspartate + ATP = (2S)-2-[5-amino-1-(5-phospho-beta-D-ribosyl)imidazole-4-carboxamido]succinate + ADP + phosphate + 2 H(+). The protein operates within purine metabolism; IMP biosynthesis via de novo pathway; 5-amino-1-(5-phospho-D-ribosyl)imidazole-4-carboxamide from 5-amino-1-(5-phospho-D-ribosyl)imidazole-4-carboxylate: step 1/2. This Streptococcus pneumoniae (strain 70585) protein is Phosphoribosylaminoimidazole-succinocarboxamide synthase.